Consider the following 389-residue polypeptide: tRNA(Met) cytidine acetate ligase (389 aa).

ATP-binding positions include 8-21, G97, N153, and R176; that span reads IAEF…HEYL.

The protein belongs to the TmcAL family.

It localises to the cytoplasm. The enzyme catalyses cytidine(34) in elongator tRNA(Met) + acetate + ATP = N(4)-acetylcytidine(34) in elongator tRNA(Met) + AMP + diphosphate. Catalyzes the formation of N(4)-acetylcytidine (ac(4)C) at the wobble position of elongator tRNA(Met), using acetate and ATP as substrates. First activates an acetate ion to form acetyladenylate (Ac-AMP) and then transfers the acetyl group to tRNA to form ac(4)C34. The protein is tRNA(Met) cytidine acetate ligase of Lactococcus lactis subsp. lactis (strain IL1403) (Streptococcus lactis).